The following is a 403-amino-acid chain: Poly(rC)-binding protein 4 (403 aa).

3 KH domains span residues 17 to 67 (TLTL…TITG), 101 to 154 (PVTL…TVSG), and 241 to 293 (TSSQ…TITG).

The protein resides in the cytoplasm. In terms of biological role, single-stranded nucleic acid binding protein that binds preferentially to oligo dC. The polypeptide is Poly(rC)-binding protein 4 (PCBP4) (Homo sapiens (Human)).